The chain runs to 1237 residues: Rho guanine nucleotide exchange factor 10-like protein (1237 aa).

2 disordered regions span residues 1–117 (MASS…SSRR) and 132–203 (YDDV…QPKM). The segment covering 25–45 (EAEDDPGEGFEFDDSDDDEDT) has biased composition (acidic residues). Phosphoserine is present on Ser-39. Residues Tyr-132 and Tyr-153 each carry the phosphotyrosine modification. Composition is skewed to basic and acidic residues over residues 146–163 (EAER…RAPQ) and 184–194 (EEAKPEAEPTK). Ser-241 carries the post-translational modification Phosphoserine. The 188-residue stretch at 276 to 463 (VRRHILGSIV…ETLAEKLNEQ (188 aa)) folds into the DH domain. Disordered stretches follow at residues 1091–1118 (QEEA…PASH) and 1142–1164 (PGPL…HSEE).

As to quaternary structure, interacts with RHOA, RHOB and RHOC.

It is found in the cytoplasm. Functionally, acts as a guanine nucleotide exchange factor (GEF) for RHOA, RHOB and RHOC. This Bos taurus (Bovine) protein is Rho guanine nucleotide exchange factor 10-like protein (ARHGEF10L).